A 141-amino-acid polypeptide reads, in one-letter code: MPKKITALIKLALPAGKATPAPPVGPALGQHGVNIAAFCKEYNARTTEKMGLIIPVEISVYEDRSYTFILKTPPASVLLANAAKVKKGSATPNRVNVGSVTKAQLEEIANIKLPDLNTTEISSAIRIVEGTARNMGITVSD.

Belongs to the universal ribosomal protein uL11 family. Part of the ribosomal stalk of the 50S ribosomal subunit. Interacts with L10 and the large rRNA to form the base of the stalk. L10 forms an elongated spine to which L12 dimers bind in a sequential fashion forming a multimeric L10(L12)X complex.

Its subcellular location is the plastid. It localises to the chloroplast. In terms of biological role, forms part of the ribosomal stalk which helps the ribosome interact with GTP-bound translation factors. The sequence is that of Large ribosomal subunit protein uL11c from Thalassiosira pseudonana (Marine diatom).